Here is a 329-residue protein sequence, read N- to C-terminus: Sulfate/thiosulfate import ATP-binding protein CysA (329 aa).

Residues 3 to 237 form the ABC transporter domain; sequence IEVRNVSKRF…PANDFVYHFL (235 aa). 35 to 42 contributes to the ATP binding site; it reads GPSGCGKT.

The protein belongs to the ABC transporter superfamily. Sulfate/tungstate importer (TC 3.A.1.6) family. In terms of assembly, the complex is composed of two ATP-binding proteins (CysA), two transmembrane proteins (CysT and CysW) and a solute-binding protein (CysP).

The protein resides in the cell inner membrane. The enzyme catalyses sulfate(out) + ATP + H2O = sulfate(in) + ADP + phosphate + H(+). It carries out the reaction thiosulfate(out) + ATP + H2O = thiosulfate(in) + ADP + phosphate + H(+). In terms of biological role, part of the ABC transporter complex CysAWTP involved in sulfate/thiosulfate import. Responsible for energy coupling to the transport system. This Pseudomonas putida (strain ATCC 47054 / DSM 6125 / CFBP 8728 / NCIMB 11950 / KT2440) protein is Sulfate/thiosulfate import ATP-binding protein CysA.